A 473-amino-acid chain; its full sequence is Photosystem II CP43 reaction center protein (473 aa).

Positions 1-14 (MKTLYSLRRYFHVE) are excised as a propeptide. Thr15 carries the N-acetylthreonine modification. A Phosphothreonine modification is found at Thr15. 5 helical membrane passes run 69–93 (LFEVAHFVPEKPMYEQGLILLPHLA), 134–155 (LIGPETLEESYPFFGYLWKDKN), 178–200 (KAMYFGGVYDTWAPGGGDVRVIS), 255–275 (KPFAWARRAFVWSGEAYLSYS), and 291–312 (WFNNTVYPSEFFGPTGPEASQA). Glu367 lines the [CaMn4O5] cluster pocket. The chain crosses the membrane as a helical span at residues 447–471 (RARAAAAGFEKGIDRDTEPVLSMRP).

Belongs to the PsbB/PsbC family. PsbC subfamily. As to quaternary structure, PSII is composed of 1 copy each of membrane proteins PsbA, PsbB, PsbC, PsbD, PsbE, PsbF, PsbH, PsbI, PsbJ, PsbK, PsbL, PsbM, PsbT, PsbX, PsbY, PsbZ, Psb30/Ycf12, at least 3 peripheral proteins of the oxygen-evolving complex and a large number of cofactors. It forms dimeric complexes. It depends on Binds multiple chlorophylls and provides some of the ligands for the Ca-4Mn-5O cluster of the oxygen-evolving complex. It may also provide a ligand for a Cl- that is required for oxygen evolution. PSII binds additional chlorophylls, carotenoids and specific lipids. as a cofactor.

Its subcellular location is the plastid. It is found in the chloroplast thylakoid membrane. One of the components of the core complex of photosystem II (PSII). It binds chlorophyll and helps catalyze the primary light-induced photochemical processes of PSII. PSII is a light-driven water:plastoquinone oxidoreductase, using light energy to abstract electrons from H(2)O, generating O(2) and a proton gradient subsequently used for ATP formation. This chain is Photosystem II CP43 reaction center protein, found in Ostreococcus tauri.